Here is a 288-residue protein sequence, read N- to C-terminus: ATP synthase gamma chain (288 aa).

It belongs to the ATPase gamma chain family. F-type ATPases have 2 components, CF(1) - the catalytic core - and CF(0) - the membrane proton channel. CF(1) has five subunits: alpha(3), beta(3), gamma(1), delta(1), epsilon(1). CF(0) has three main subunits: a, b and c.

The protein resides in the cell membrane. Functionally, produces ATP from ADP in the presence of a proton gradient across the membrane. The gamma chain is believed to be important in regulating ATPase activity and the flow of protons through the CF(0) complex. The chain is ATP synthase gamma chain from Shouchella clausii (strain KSM-K16) (Alkalihalobacillus clausii).